The primary structure comprises 134 residues: MAGHPKEKVIPDEVHQNQILRELYLKELRTQKLYTQYHVNPLRKIHTVTRKPMSWHDNLEEPADARFLNLIHHAAQGPRKKYPETQTENQEVGWDLEPLINPERHDRRLNHFRVCSDITLYKAKTWGLGDDHHK.

The disordered stretch occupies residues 76–95 (QGPRKKYPETQTENQEVGWD).

The protein belongs to the CFAP144 family. Microtubule inner protein component of sperm flagellar doublet microtubules.

It localises to the cytoplasm. The protein resides in the cytoskeleton. It is found in the cilium axoneme. Its subcellular location is the flagellum axoneme. Microtubule inner protein (MIP) part of the dynein-decorated doublet microtubules (DMTs) in cilia axoneme, which is required for motile cilia beating. This is Cilia- and flagella-associated protein 144 from Homo sapiens (Human).